A 293-amino-acid polypeptide reads, in one-letter code: Mycothiol S-conjugate amidase (293 aa).

Histidine 13, aspartate 16, and histidine 144 together coordinate Zn(2+).

Belongs to the MshB deacetylase family. Mca subfamily. As to quaternary structure, monomer. Zn(2+) serves as cofactor.

The catalysed reaction is mycothiol S-conjugate + H2O = an N-acetyl-L-cysteine-S-conjugate + 1D-myo-inositol 2-amino-2-deoxy-alpha-D-glucopyranoside. Functionally, a mycothiol (MSH, N-acetylcysteinyl-glucosaminyl-inositol) S-conjugate amidase, it recycles conjugated MSH to the N-acetyl cysteine conjugate (AcCys S-conjugate, a mercapturic acid) and the MSH precursor. Involved in MSH-dependent detoxification of a number of alkylating agents and antibiotics. This is Mycothiol S-conjugate amidase from Streptomyces coelicolor (strain ATCC BAA-471 / A3(2) / M145).